Consider the following 316-residue polypeptide: tRNA dimethylallyltransferase (316 aa).

17-24 provides a ligand contact to ATP; it reads GPTASGKT. 19–24 is a binding site for substrate; that stretch reads TASGKT. 4 interaction with substrate tRNA regions span residues 42 to 45, 166 to 170, 247 to 252, and 280 to 287; these read DSAL, QRLSR, RCVGYR, and KRQITWLR.

The protein belongs to the IPP transferase family. As to quaternary structure, monomer. The cofactor is Mg(2+).

It catalyses the reaction adenosine(37) in tRNA + dimethylallyl diphosphate = N(6)-dimethylallyladenosine(37) in tRNA + diphosphate. Catalyzes the transfer of a dimethylallyl group onto the adenine at position 37 in tRNAs that read codons beginning with uridine, leading to the formation of N6-(dimethylallyl)adenosine (i(6)A). The sequence is that of tRNA dimethylallyltransferase from Escherichia coli O157:H7.